Reading from the N-terminus, the 352-residue chain is Homeobox protein Mohawk (352 aa).

Positions 19-53 (GASERERGGRPYSGVLDSPHARPEVGIADGPPLKD) are disordered. Positions 71 to 132 (VRHKRQALQD…NARRRLKNTV (62 aa)) form a DNA-binding region, homeobox; TALE-type. Disordered stretches follow at residues 157-194 (LSVS…IKSE) and 245-272 (TRQR…SETE).

The protein belongs to the TALE/IRO homeobox family.

The protein localises to the nucleus. May act as a morphogenetic regulator of cell adhesion. The polypeptide is Homeobox protein Mohawk (MKX) (Pongo abelii (Sumatran orangutan)).